The sequence spans 179 residues: Large ribosomal subunit protein uL6 (179 aa).

The protein belongs to the universal ribosomal protein uL6 family. As to quaternary structure, part of the 50S ribosomal subunit.

This protein binds to the 23S rRNA, and is important in its secondary structure. It is located near the subunit interface in the base of the L7/L12 stalk, and near the tRNA binding site of the peptidyltransferase center. The sequence is that of Large ribosomal subunit protein uL6 from Chlorobium limicola (strain DSM 245 / NBRC 103803 / 6330).